The primary structure comprises 255 residues: 4-hydroxy-tetrahydrodipicolinate reductase (255 aa).

Residues 9-14 (GFKGKM), 89-91 (GTT), and 115-118 (APNF) contribute to the NAD(+) site. Residue histidine 145 is the Proton donor/acceptor of the active site. Histidine 146 is a (S)-2,3,4,5-tetrahydrodipicolinate binding site. Residue lysine 149 is the Proton donor of the active site. 155–156 (GT) provides a ligand contact to (S)-2,3,4,5-tetrahydrodipicolinate.

It belongs to the DapB family.

The protein localises to the cytoplasm. The catalysed reaction is (S)-2,3,4,5-tetrahydrodipicolinate + NAD(+) + H2O = (2S,4S)-4-hydroxy-2,3,4,5-tetrahydrodipicolinate + NADH + H(+). It catalyses the reaction (S)-2,3,4,5-tetrahydrodipicolinate + NADP(+) + H2O = (2S,4S)-4-hydroxy-2,3,4,5-tetrahydrodipicolinate + NADPH + H(+). Its pathway is amino-acid biosynthesis; L-lysine biosynthesis via DAP pathway; (S)-tetrahydrodipicolinate from L-aspartate: step 4/4. Functionally, catalyzes the conversion of 4-hydroxy-tetrahydrodipicolinate (HTPA) to tetrahydrodipicolinate. The sequence is that of 4-hydroxy-tetrahydrodipicolinate reductase from Streptococcus gordonii (strain Challis / ATCC 35105 / BCRC 15272 / CH1 / DL1 / V288).